Here is a 415-residue protein sequence, read N- to C-terminus: MLDHINELPDWISRGLDDLFPNDNSGDSDQSFLKRLELSSVDKKPLRVKLGIDPTGTDIHIGHSILFRKLRAFQDAGHTAILIIGDFTARIGDPTGKSKTRIQLSKDEVQSNALNYLEQLGLGKDPKDSLLDFSIPSRIEIRRNSEWLENLNLSKVIELLSNSTVGQMLAKEDFSNRYKSGTPISLHEFLYPLLQGYDSVAINSDVELGGTDQKFNIAMGRDLQKAFGQKPQFGMLLPILVGLDGARKMSKSLDNIVGINEDSLSMYSKLEKVPDDLVLTYLNLLTNENLKELSSNPREVQKFMALKVTSNFKGIEAAKNAQFNSEKLVLGTKDSLEEIPEASVSNVNFPAKAFYLFSKMEMCSSSSEARRQILGGGVRIDGKKIMDPNLEFHTPDDLIGKILQVGKKKFLRVST.

A 'HIGH' region motif is present at residues 54 to 63 (PTGTDIHIGH). The short motif at 248 to 252 (KMSKS) is the 'KMSKS' region element. Lysine 251 contacts ATP. The S4 RNA-binding domain occupies 351 to 415 (AKAFYLFSKM…GKKKFLRVST (65 aa)).

The protein belongs to the class-I aminoacyl-tRNA synthetase family. TyrS type 2 subfamily. In terms of assembly, homodimer.

It localises to the cytoplasm. It catalyses the reaction tRNA(Tyr) + L-tyrosine + ATP = L-tyrosyl-tRNA(Tyr) + AMP + diphosphate + H(+). In terms of biological role, catalyzes the attachment of tyrosine to tRNA(Tyr) in a two-step reaction: tyrosine is first activated by ATP to form Tyr-AMP and then transferred to the acceptor end of tRNA(Tyr). The chain is Tyrosine--tRNA ligase from Prochlorococcus marinus (strain NATL2A).